We begin with the raw amino-acid sequence, 127 residues long: MPEVSSKGATISKKGFKKAVVKTQKKEGKKRKRTRKESYSIYIYKVLKQVHPDTGISSKAMSIMNSFVTDIFERIASEASRLAHYSKRSTISSREIQTAVRLLLPGELAKHAVSEGTKAVTKYTSSK.

The interval 1-36 is disordered; sequence MPEVSSKGATISKKGFKKAVVKTQKKEGKKRKRTRK. An N-acetylproline modification is found at Pro2. 7 positions are modified to N6-acetyllysine; alternate: Lys7, Lys13, Lys14, Lys17, Lys18, Lys22, and Lys25. Lys7, Lys13, Lys14, Lys17, Lys18, Lys22, Lys25, and Lys36 each carry N6-crotonyllysine; alternate. 2 positions are modified to N6-lactoyllysine; alternate: Lys7 and Lys13. Lys7 participates in a covalent cross-link: Glycyl lysine isopeptide (Lys-Gly) (interchain with G-Cter in SUMO2); alternate. Lys17, Lys18, Lys22, and Lys25 each carry N6-lactoyllysine; alternate. Residue Lys22 forms a Glycyl lysine isopeptide (Lys-Gly) (interchain with G-Cter in SUMO2); alternate linkage. The residue at position 36 (Lys36) is an N6-succinyllysine; alternate. Residue Lys36 forms a Glycyl lysine isopeptide (Lys-Gly) (interchain with G-Cter in ubiquitin); alternate linkage. Ser38 is subject to Phosphoserine. Position 45 is an N6-lactoyllysine; alternate (Lys45). Lys48 is subject to N6-methyllysine. Lys59 is subject to N6,N6-dimethyllysine. A Dimethylated arginine modification is found at Arg81. Position 86 is a phosphoserine (Ser86). Position 87 is an N6-acetyllysine; alternate (Lys87). Residue Lys87 is modified to N6-lactoyllysine; alternate. Lys87 bears the N6,N6,N6-trimethyllysine; alternate mark. An omega-N-methylarginine mark is found at Arg88 and Arg94. Lys110 is subject to N6-lactoyllysine; alternate. N6-methyllysine is present on Lys110. Thr117 is subject to Phosphothreonine. Lys118 and Lys122 each carry N6-lactoyllysine; alternate. Residues Lys118 and Lys122 each carry the N6-succinyllysine; alternate modification. At Lys118 the chain carries N6-methylated lysine; alternate. Residue Lys122 forms a Glycyl lysine isopeptide (Lys-Gly) (interchain with G-Cter in ubiquitin); alternate linkage.

It belongs to the histone H2B family. In terms of assembly, the nucleosome is a histone octamer containing two molecules each of H2A, H2B, H3 and H4 assembled in one H3-H4 heterotetramer and two H2A-H2B heterodimers. Monoubiquitination at Lys-36 (H2BK34Ub) by the MSL1/MSL2 dimer is required for histone H3 'Lys-4' (H3K4me) and 'Lys-79' (H3K79me) methylation and transcription activation at specific gene loci, such as HOXA9 and MEIS1 loci. Similarly, monoubiquitination at Lys-122 (H2BK120Ub) by the RNF20/40 complex gives a specific tag for epigenetic transcriptional activation and is also prerequisite for histone H3 'Lys-4' and 'Lys-79' methylation. It also functions cooperatively with the FACT dimer to stimulate elongation by RNA polymerase II. H2BK120Ub also acts as a regulator of mRNA splicing: deubiquitination by USP49 is required for efficient cotranscriptional splicing of a large set of exons. In terms of processing, crotonylation (Kcr) is specifically present in male germ cells and marks testis-specific genes in post-meiotic cells, including X-linked genes that escape sex chromosome inactivation in haploid cells. Crotonylation marks active promoters and enhancers and confers resistance to transcriptional repressors. It is also associated with post-meiotically activated genes on autosomes. Post-translationally, acetylated during spermatogenesis. Acetylated form is most abundant in spermatogonia compared to spermatocytes and round spermatids. Phosphorylated at Thr-117 in spermatogonia, spermatocytes and round spermatids. In terms of processing, methylated at Lys-118 in spermatogonia, spermatocytes and round spermatids. Post-translationally, lactylated in macrophages by EP300/P300 by using lactoyl-CoA directly derived from endogenous or exogenous lactate, leading to stimulates gene transcription. In terms of tissue distribution, mainly expressed in testis, and the corresponding protein is also present in mature sperm (at protein level). Also found in some fat cells.

It localises to the nucleus. The protein resides in the chromosome. Its function is as follows. Variant histone specifically required to direct the transformation of dissociating nucleosomes to protamine in male germ cells. Entirely replaces classical histone H2B prior nucleosome to protamine transition and probably acts as a nucleosome dissociating factor that creates a more dynamic chromatin, facilitating the large-scale exchange of histones. Core component of nucleosome. Nucleosomes wrap and compact DNA into chromatin, limiting DNA accessibility to the cellular machineries which require DNA as a template. Histones thereby play a central role in transcription regulation, DNA repair, DNA replication and chromosomal stability. DNA accessibility is regulated via a complex set of post-translational modifications of histones, also called histone code, and nucleosome remodeling. Also found in fat cells, its function and the presence of post-translational modifications specific to such cells are still unclear. The chain is Histone H2B type 1-A from Homo sapiens (Human).